Consider the following 399-residue polypeptide: Glutamyl-tRNA reductase (399 aa).

Residues 45-48, Ser101, 106-108, and Gln112 contribute to the substrate site; these read TCNR and EDQ. Catalysis depends on Cys46, which acts as the Nucleophile. An NADP(+)-binding site is contributed by 177 to 182; that stretch reads GFGKIG.

The protein belongs to the glutamyl-tRNA reductase family. As to quaternary structure, homodimer.

The enzyme catalyses (S)-4-amino-5-oxopentanoate + tRNA(Glu) + NADP(+) = L-glutamyl-tRNA(Glu) + NADPH + H(+). The protein operates within porphyrin-containing compound metabolism; protoporphyrin-IX biosynthesis; 5-aminolevulinate from L-glutamyl-tRNA(Glu): step 1/2. Functionally, catalyzes the NADPH-dependent reduction of glutamyl-tRNA(Glu) to glutamate 1-semialdehyde (GSA). The polypeptide is Glutamyl-tRNA reductase (Clostridium kluyveri (strain ATCC 8527 / DSM 555 / NBRC 12016 / NCIMB 10680 / K1)).